An 86-amino-acid chain; its full sequence is MSVRIRLKRMGAKKRPYYRIVVMNSASPRDGRAIEELGYYHPVEKQKQIKIKEDRMKDWISKGAILSDTVKMLLNKNNLNAKSQEV.

This sequence belongs to the bacterial ribosomal protein bS16 family.

This Borrelia garinii subsp. bavariensis (strain ATCC BAA-2496 / DSM 23469 / PBi) (Borreliella bavariensis) protein is Small ribosomal subunit protein bS16.